A 161-amino-acid chain; its full sequence is Endoribonuclease YbeY (161 aa).

Residues His121, His125, and His131 each contribute to the Zn(2+) site.

This sequence belongs to the endoribonuclease YbeY family. Requires Zn(2+) as cofactor.

The protein resides in the cytoplasm. In terms of biological role, single strand-specific metallo-endoribonuclease involved in late-stage 70S ribosome quality control and in maturation of the 3' terminus of the 16S rRNA. This Xylella fastidiosa (strain M23) protein is Endoribonuclease YbeY.